Reading from the N-terminus, the 237-residue chain is Ribosomal RNA small subunit methyltransferase G (237 aa).

Residues Gly78, Phe83, 129–130, and Arg146 each bind S-adenosyl-L-methionine; that span reads AE.

Belongs to the methyltransferase superfamily. RNA methyltransferase RsmG family.

Its subcellular location is the cytoplasm. Functionally, specifically methylates the N7 position of a guanine in 16S rRNA. The protein is Ribosomal RNA small subunit methyltransferase G of Mesoplasma florum (strain ATCC 33453 / NBRC 100688 / NCTC 11704 / L1) (Acholeplasma florum).